The sequence spans 247 residues: Probable transcriptional regulatory protein SynWH7803_1972 (247 aa).

Belongs to the TACO1 family.

Its subcellular location is the cytoplasm. This Synechococcus sp. (strain WH7803) protein is Probable transcriptional regulatory protein SynWH7803_1972.